A 450-amino-acid polypeptide reads, in one-letter code: Glucose-6-phosphate isomerase (450 aa).

The active-site Proton donor is the E289. Catalysis depends on residues H310 and K424.

This sequence belongs to the GPI family.

It localises to the cytoplasm. It catalyses the reaction alpha-D-glucose 6-phosphate = beta-D-fructose 6-phosphate. It participates in carbohydrate biosynthesis; gluconeogenesis. It functions in the pathway carbohydrate degradation; glycolysis; D-glyceraldehyde 3-phosphate and glycerone phosphate from D-glucose: step 2/4. In terms of biological role, catalyzes the reversible isomerization of glucose-6-phosphate to fructose-6-phosphate. The sequence is that of Glucose-6-phosphate isomerase from Leptospira biflexa serovar Patoc (strain Patoc 1 / Ames).